Reading from the N-terminus, the 435-residue chain is GTPase Der (435 aa).

2 consecutive EngA-type G domains span residues 4-167 and 175-350; these read PIVA…SPDA and ISFS…ENKN. GTP contacts are provided by residues 10-17, 57-61, 119-122, 181-188, 228-232, and 293-296; these read GQPNVGKS, DTGGI, NKAD, GRPNVGKS, DTAGI, and NKWD. In terms of domain architecture, KH-like spans 351 to 435; it reads QRIQSSVLND…PIKILPRKRK (85 aa).

The protein belongs to the TRAFAC class TrmE-Era-EngA-EngB-Septin-like GTPase superfamily. EngA (Der) GTPase family. In terms of assembly, associates with the 50S ribosomal subunit.

Functionally, GTPase that plays an essential role in the late steps of ribosome biogenesis. This chain is GTPase Der, found in Lactobacillus delbrueckii subsp. bulgaricus (strain ATCC 11842 / DSM 20081 / BCRC 10696 / JCM 1002 / NBRC 13953 / NCIMB 11778 / NCTC 12712 / WDCM 00102 / Lb 14).